The sequence spans 376 residues: Putative cytosolic 5'-nucleotidase 3 (376 aa).

Asp-119 serves as the catalytic Nucleophile. Positions 119 and 121 each coordinate Mg(2+). Asp-121 functions as the Proton donor in the catalytic mechanism. Substrate contacts are provided by residues Glu-168, Ser-189, 236–237, and Lys-286; that span reads SA. A Mg(2+)-binding site is contributed by Asp-312.

This sequence belongs to the pyrimidine 5'-nucleotidase family.

It localises to the cytoplasm. The enzyme catalyses a ribonucleoside 5'-phosphate + H2O = a ribonucleoside + phosphate. This is Putative cytosolic 5'-nucleotidase 3 from Caenorhabditis elegans.